The primary structure comprises 487 residues: N-succinylglutamate 5-semialdehyde dehydrogenase (487 aa).

221 to 226 (GSSDTG) contacts NAD(+). Active-site residues include Glu244 and Cys278.

The protein belongs to the aldehyde dehydrogenase family. AstD subfamily.

It carries out the reaction N-succinyl-L-glutamate 5-semialdehyde + NAD(+) + H2O = N-succinyl-L-glutamate + NADH + 2 H(+). It functions in the pathway amino-acid degradation; L-arginine degradation via AST pathway; L-glutamate and succinate from L-arginine: step 4/5. In terms of biological role, catalyzes the NAD-dependent reduction of succinylglutamate semialdehyde into succinylglutamate. This Burkholderia orbicola (strain MC0-3) protein is N-succinylglutamate 5-semialdehyde dehydrogenase.